The sequence spans 364 residues: Melatonin receptor type 1B (364 aa).

The first 28 residues, 1 to 28, serve as a signal peptide directing secretion; the sequence is MPDNSSIANCCAASGLAARPSWPGSAEA. Over 29 to 45 the chain is Extracellular; the sequence is EPPETPRAPWVAPMLST. A helical transmembrane segment spans residues 46–66; that stretch reads VVIVTTAVDFVGNLLVILSVL. Residues 67-81 lie on the Cytoplasmic side of the membrane; that stretch reads RNRKLRNAGNLFVVN. Residues 82-102 form a helical membrane-spanning segment; it reads LALADLVVALYPYPLILVAIL. The Extracellular portion of the chain corresponds to 103–115; the sequence is HDGWVLGEIHCKA. Residues cysteine 113 and cysteine 190 are joined by a disulfide bond. The chain crosses the membrane as a helical span at residues 116 to 136; that stretch reads SAFVMGLSVIGSVFNITAIAI. Residues 137-158 lie on the Cytoplasmic side of the membrane; it reads NRYWCICHSATYHRACSQWHAP. Residues 159 to 179 traverse the membrane as a helical segment; the sequence is LYISLIWLLTLVALVPNFFVG. Residues 180–200 are Extracellular-facing; sequence SLEYDPRIYSCTFIQTASTQY. The helical transmembrane segment at 201–221 threads the bilayer; that stretch reads TMAVVAIHFLLPIAVVSFCYL. Topologically, residues 222–255 are cytoplasmic; that stretch reads RIWILVLQARRKAKAERKLRLRPSDLRSFLTMFA. A helical transmembrane segment spans residues 256 to 276; the sequence is VFVVFAICWAPLNCIGLAVAI. Over 277–287 the chain is Extracellular; sequence NPEAMALQIPE. A helical transmembrane segment spans residues 288–308; sequence GLFVTSYFLAYFNSCLNAIVY. The Cytoplasmic portion of the chain corresponds to 309 to 364; the sequence is GLLNQNFRREYKRILSALWSTGRCFHDASKCHLTEDLQGPVPPAAMATIPVQEGAL.

Belongs to the G-protein coupled receptor 1 family. In terms of tissue distribution, expressed in the hippocampus, kidney, and ovary.

The protein resides in the cell membrane. High affinity receptor for melatonin. The activity of this receptor is mediated by pertussis toxin sensitive G proteins that inhibits adenylate cyclase activity. This Rattus norvegicus (Rat) protein is Melatonin receptor type 1B.